We begin with the raw amino-acid sequence, 278 residues long: Small ribosomal subunit protein uS3 (278 aa).

The region spanning 38–106 is the KH type-2 domain; sequence IRKLLATGLE…QVQLNILEVK (69 aa). The interval 215–278 is disordered; it reads AAAAPAGADR…AAGQPETTES (64 aa). A compositionally biased stretch (low complexity) spans 238-278; that stretch reads SGASGTTATSTDAGRAATEEAPATDAAATAPAAGQPETTES.

It belongs to the universal ribosomal protein uS3 family. As to quaternary structure, part of the 30S ribosomal subunit. Forms a tight complex with proteins S10 and S14.

Functionally, binds the lower part of the 30S subunit head. Binds mRNA in the 70S ribosome, positioning it for translation. This chain is Small ribosomal subunit protein uS3, found in Mycolicibacterium gilvum (strain PYR-GCK) (Mycobacterium gilvum (strain PYR-GCK)).